We begin with the raw amino-acid sequence, 317 residues long: Olfactory receptor-like protein OLF3 (317 aa).

Residues 1–25 are Extracellular-facing; it reads MGTGNQTWVREFVLLGLSSDWDTEV. Asparagine 5 carries an N-linked (GlcNAc...) asparagine glycan. Residues 26–49 traverse the membrane as a helical segment; that stretch reads SLFVLFLITYMVTVLGNFLIILLI. Residues 50-57 are Cytoplasmic-facing; sequence RLDSRLHT. A helical membrane pass occupies residues 58–79; the sequence is PMYFFLTNLSLVDVSYATSIIP. At 80–100 the chain is on the extracellular side; that stretch reads QMLAHLLAAHKAIPFVSCAAQ. Residues 101–120 form a helical membrane-spanning segment; it reads LFFSLGLGGIEFVLLAVMAY. At 121 to 139 the chain is on the cytoplasmic side; the sequence is DRYVAVCDPLRYSVIMHGG. Residues 140–158 form a helical membrane-spanning segment; it reads LCTRLAITSWVSGSMNSLM. Topologically, residues 159–196 are extracellular; sequence QTVITFQLPMCTNKYIDHISCELLAVVRLACVDTSSNE. Residues 197-219 form a helical membrane-spanning segment; that stretch reads IAIMVSSIVLLMTPFCLVLLSYI. Residues 220–236 are Cytoplasmic-facing; the sequence is QIISTILKIQSTEGRKK. A helical transmembrane segment spans residues 237–260; the sequence is AFHTCASHLTVVVLCYGMAIFTYI. Over 261 to 272 the chain is Extracellular; it reads QPRSSPSVLQEK. Residues 273 to 292 traverse the membrane as a helical segment; sequence LISLFYSVLTPMLNPMIYSV. Over 293–317 the chain is Cytoplasmic; sequence RNKEVKGAWQKLLGQLTGITSKLAT.

This sequence belongs to the G-protein coupled receptor 1 family.

The protein resides in the cell membrane. In terms of biological role, putative odorant or sperm cell receptor. This Canis lupus familiaris (Dog) protein is Olfactory receptor-like protein OLF3.